Reading from the N-terminus, the 37-residue chain is Large ribosomal subunit protein bL36c (37 aa).

It belongs to the bacterial ribosomal protein bL36 family.

The protein localises to the plastid. The protein resides in the chloroplast. This Oenothera argillicola (Appalachian evening primrose) protein is Large ribosomal subunit protein bL36c.